A 113-amino-acid polypeptide reads, in one-letter code: Fruiting body-specific class I hydrophobin fbh1 (113 aa).

Residues 1-20 (MFSIRIATVVLAASALLAAA) form the signal peptide. 4 cysteine pairs are disulfide-bonded: Cys-33/Cys-92, Cys-40/Cys-86, Cys-41/Cys-73, and Cys-93/Cys-106.

The protein belongs to the fungal hydrophobin family. Self-assembles to form functional amyloid fibrils called rodlets. Self-assembly into fibrillar rodlets occurs spontaneously at hydrophobic:hydrophilic interfaces and the rodlets further associate laterally to form amphipathic monolayers.

The protein resides in the secreted. It is found in the cell wall. Its function is as follows. Aerial growth, conidiation, and dispersal of filamentous fungi in the environment rely upon a capability of their secreting small amphipathic proteins called hydrophobins (HPBs) with low sequence identity. Class I can self-assemble into an outermost layer of rodlet bundles on aerial cell surfaces, conferring cellular hydrophobicity that supports fungal growth, development and dispersal; whereas Class II form highly ordered films at water-air interfaces through intermolecular interactions but contribute nothing to the rodlet structure. Fbh1 is a fruiting body-specific class I hydrophobin that is involved in the growth rate and primordia formation. This chain is Fruiting body-specific class I hydrophobin fbh1, found in Pleurotus ostreatus (strain PC15) (Oyster mushroom).